A 157-amino-acid polypeptide reads, in one-letter code: UPF0262 protein RL0614 (157 aa).

This sequence belongs to the UPF0262 family.

The protein is UPF0262 protein RL0614 of Rhizobium johnstonii (strain DSM 114642 / LMG 32736 / 3841) (Rhizobium leguminosarum bv. viciae).